The sequence spans 143 residues: Large ribosomal subunit protein uL13 (143 aa).

It belongs to the universal ribosomal protein uL13 family. As to quaternary structure, part of the 50S ribosomal subunit.

In terms of biological role, this protein is one of the early assembly proteins of the 50S ribosomal subunit, although it is not seen to bind rRNA by itself. It is important during the early stages of 50S assembly. This is Large ribosomal subunit protein uL13 from Symbiobacterium thermophilum (strain DSM 24528 / JCM 14929 / IAM 14863 / T).